Here is a 167-residue protein sequence, read N- to C-terminus: uncharacterized protein (167 aa).

Positions 1–10 are enriched in basic residues; it reads MPLRRCRAWR. The segment at 1–23 is disordered; the sequence is MPLRRCRAWRGHSQPGTGSRSNE.

This is an uncharacterized protein from Sinorhizobium fredii (strain NBRC 101917 / NGR234).